Reading from the N-terminus, the 547-residue chain is NXPE family member 1 (547 aa).

The first 21 residues, 1 to 21 (MSSNTMLQKTLLILISFSVVT), serve as a signal peptide directing secretion. 2 N-linked (GlcNAc...) asparagine glycosylation sites follow: Asn-39 and Asn-211.

The protein belongs to the NXPE family.

Its subcellular location is the secreted. In Homo sapiens (Human), this protein is NXPE family member 1 (NXPE1).